The primary structure comprises 63 residues: Actiflagelin (63 aa).

Intrachain disulfides connect Cys3-Cys24, Cys6-Cys11, Cys17-Cys39, Cys43-Cys55, and Cys56-Cys61. Pro63 bears the Proline amide mark.

Post-translationally, contains 5 disulfide bonds. In terms of tissue distribution, expressed by the venom gland.

It localises to the secreted. Unknown. In vitro, this toxin activates sperm motility when tested on OF1 male mice. In Walterinnesia aegyptia (Desert black snake), this protein is Actiflagelin.